We begin with the raw amino-acid sequence, 295 residues long: MACIENVLGGHAPSPTAVAAAENGNREPRPSLPFQCPKDDAGSWGHPGVPLRPPFKVLSDLARERLERPSERTGSCIPVDGWRALKPPYGPPPAVAEEPLATGEVNSSEGPAGWRQSGQDSINNVSQEFSGSPPALMVGGTKVSNGGTERGGSNAGLYVALPRGQGFFPSRGPQVRGPTHISTLRSGIMMELPPGSTRVTGKERLARVSFPLGGPRHPVKNWPRPMPLASSTTGLGSRTTAHCFIPPRPPSFNPFLAMPMAFAPPPIFGPPLPSCFADFPSWGMPAPASSNRENN.

Disordered regions lie at residues 10–48 and 101–120; these read GHAP…GHPG and ATGE…SGQD.

This is Proline-rich protein 32 (PRR32) from Bos taurus (Bovine).